We begin with the raw amino-acid sequence, 91 residues long: Small ribosomal subunit protein uS15 (91 aa).

The protein belongs to the universal ribosomal protein uS15 family. In terms of assembly, part of the 30S ribosomal subunit. Forms a bridge to the 50S subunit in the 70S ribosome, contacting the 23S rRNA.

One of the primary rRNA binding proteins, it binds directly to 16S rRNA where it helps nucleate assembly of the platform of the 30S subunit by binding and bridging several RNA helices of the 16S rRNA. In terms of biological role, forms an intersubunit bridge (bridge B4) with the 23S rRNA of the 50S subunit in the ribosome. The sequence is that of Small ribosomal subunit protein uS15 from Cytophaga hutchinsonii (strain ATCC 33406 / DSM 1761 / CIP 103989 / NBRC 15051 / NCIMB 9469 / D465).